The primary structure comprises 49 residues: Large ribosomal subunit protein bL33A (49 aa).

Belongs to the bacterial ribosomal protein bL33 family.

The sequence is that of Large ribosomal subunit protein bL33A from Streptococcus pneumoniae (strain Hungary19A-6).